Here is a 156-residue protein sequence, read N- to C-terminus: Calglandulin (156 aa).

4 consecutive EF-hand domains span residues 8-43, 44-79, 82-117, and 118-153; these read EQITEYKGIFEMFDEEGNGLVKTDDLESLMSLIGIN, PTKRDLANMAKDVDKDKKGTFNCDGFLVLMGIYHEK, NQDEELRAAFKVFDKEHKGYIEWDTLKYVLMNAGEP, and LNEHEAELMMKEADKDGDGTIDYEEFVAMMTGESFK. Residues D131, D133, D135, T137, and E142 each coordinate Ca(2+).

Belongs to the calmodulin family. Calglandulin subfamily. Expressed by the venom gland.

It is found in the cytoplasm. Its function is as follows. May be involved in the cellular control mechanism of the secretion of toxins from the gland into the venom. The protein is Calglandulin of Hoplocephalus stephensii (Stephens's banded snake).